Here is a 334-residue protein sequence, read N- to C-terminus: Beta-hexosaminidase (334 aa).

Substrate contacts are provided by residues Asp-60, Arg-68, Arg-133, and 163–164 (KH). Residue His-176 is the Proton donor/acceptor of the active site. Asp-247 (nucleophile) is an active-site residue.

This sequence belongs to the glycosyl hydrolase 3 family. NagZ subfamily.

The protein localises to the cytoplasm. It carries out the reaction Hydrolysis of terminal non-reducing N-acetyl-D-hexosamine residues in N-acetyl-beta-D-hexosaminides.. It functions in the pathway cell wall biogenesis; peptidoglycan recycling. Functionally, plays a role in peptidoglycan recycling by cleaving the terminal beta-1,4-linked N-acetylglucosamine (GlcNAc) from peptide-linked peptidoglycan fragments, giving rise to free GlcNAc, anhydro-N-acetylmuramic acid and anhydro-N-acetylmuramic acid-linked peptides. In Xanthomonas oryzae pv. oryzae (strain KACC10331 / KXO85), this protein is Beta-hexosaminidase.